A 184-amino-acid polypeptide reads, in one-letter code: Cysteine-rich atrial secretory protein (184 aa).

An N-terminal signal peptide occupies residues 1-26 (MATFQAHFFAAVMCVGVLGLSKLCGA). 5 cysteine pairs are disulfide-bonded: C29/C34, C65/C111, C75/C82, C123/C155, and C135/C144. N-linked (GlcNAc...) asparagine glycosylation occurs at N74.

N-glycosylated. As to expression, highly expressed in atrium. Moderately expressed in the pericardium, pulmonary vein, nephridium, arteria anterior, ovotestis and connective tissue. Low expression found in intestine, lung plexus, diaphragm, subesophageal ganglion, ventricle and digestive gland. Very low expression found in columellar retractor, pedal nerves and cerebral ganglion. Not expressed in hemocytes.

The protein localises to the secreted. This chain is Cysteine-rich atrial secretory protein, found in Achatina achatina (Giant Ghana snail).